Reading from the N-terminus, the 121-residue chain is Nitrogen fixation nifHD region glnB-like protein 2 (121 aa).

It belongs to the P(II) protein family.

Its function is as follows. Could be involved in the regulation of nitrogen fixation. The polypeptide is Nitrogen fixation nifHD region glnB-like protein 2 (glnBII) (Methanococcus maripaludis (Methanococcus deltae)).